The chain runs to 121 residues: SLFELGKMILQETGKNPAKSYGAYGCNCGVLGRGKPKDATDRCCYVHKCCYKKLTGCNPKKDRYSYSWKDKTIVCGENNPCLKELCECDKAVAICLRENLGTYNKKYRYHLKPFCKKADDC.

7 cysteine pairs are disulfide-bonded: C26-C115, C28-C44, C43-C95, C49-C121, C50-C88, C57-C81, and C75-C86. The tract at residues 105 to 117 (KKYRYHLKPFCKK) is important for membrane-damaging activities in eukaryotes and bacteria; heparin-binding.

This sequence belongs to the phospholipase A2 family. Group II subfamily. K49 sub-subfamily. In terms of assembly, homodimer; non-covalently linked. As to expression, expressed by the venom gland.

It is found in the secreted. Functionally, snake venom phospholipase A2 (PLA2) homolog that lacks enzymatic activity. Shows myotoxic activity and edema-inducing activities in vivo. A model of myotoxic mechanism has been proposed: an apo Lys49-PLA2 is activated by the entrance of a hydrophobic molecule (e.g. fatty acid) at the hydrophobic channel of the protein leading to a reorientation of a monomer. This reorientation causes a transition between 'inactive' to 'active' states, causing alignment of C-terminal and membrane-docking sites (MDoS) side-by-side and putting the membrane-disruption sites (MDiS) in the same plane, exposed to solvent and in a symmetric position for both monomers. The MDoS region stabilizes the toxin on membrane by the interaction of charged residues with phospholipid head groups. Subsequently, the MDiS region destabilizes the membrane with penetration of hydrophobic residues. This insertion causes a disorganization of the membrane, allowing an uncontrolled influx of ions (i.e. calcium and sodium), and eventually triggering irreversible intracellular alterations and cell death. This Bothrops pirajai (Piraja's lancehead) protein is Basic phospholipase A2 homolog piratoxin-2.